The following is a 268-amino-acid chain: MTRYQTLFTHLQRRQEGALVPFVTLGDPTPSLSLQIIDALVESGADALELGIPFSDPLADGPVIQSATLRALQAGVTPERCFTLLATLREKYPQLPIGLLMYANLVVNPGIDTFYRRCAQAGIDSVLIADVPLEESAPFHAAAQRYGVAPIYLCPPNADDVLLQQLAARSQGYVYLLSRAGVTGSDRPCLPPLRHLTTRLAALGAAPTLQGFGIQTPDQVRSALDGGAAGAISGSAVVDLIARHLDTPPQMLQQLRAFIQTMKAATRA.

Residues Glu49 and Asp60 each act as proton acceptor in the active site.

This sequence belongs to the TrpA family. In terms of assembly, tetramer of two alpha and two beta chains.

It catalyses the reaction (1S,2R)-1-C-(indol-3-yl)glycerol 3-phosphate + L-serine = D-glyceraldehyde 3-phosphate + L-tryptophan + H2O. It participates in amino-acid biosynthesis; L-tryptophan biosynthesis; L-tryptophan from chorismate: step 5/5. In terms of biological role, the alpha subunit is responsible for the aldol cleavage of indoleglycerol phosphate to indole and glyceraldehyde 3-phosphate. The chain is Tryptophan synthase alpha chain from Edwardsiella ictaluri (strain 93-146).